The following is a 512-amino-acid chain: Pantothenate transporter FEN2 (512 aa).

Over 1-27 (MMKESKSITQHEVERESVSSKRAIKKR) the chain is Cytoplasmic. Residues 28-48 (LLLFKIDLFVLSFVCLQYWIN) form a helical membrane-spanning segment. At 49–79 (YVDRVGFTNAYISGMKEDLKMVGNDLTVSNT) the chain is on the extracellular side. The chain crosses the membrane as a helical span at residues 80–100 (VFMIGYIVGMVPNNLMLLCVP). The Cytoplasmic segment spans residues 101-102 (PR). Residues 103 to 123 (IWLSFCTFAWGLLTLGMYKVT) form a helical membrane-spanning segment. The Extracellular portion of the chain corresponds to 124–132 (SFKHICAIR). A helical transmembrane segment spans residues 133–153 (FFQALFESCTFSGTHFVLGSW). The Cytoplasmic portion of the chain corresponds to 154–164 (YKEDELPIRSA). The chain crosses the membrane as a helical span at residues 165 to 185 (IFTGSGLVGSMFSGFMQTSIF). The Extracellular portion of the chain corresponds to 186–198 (THLNGRNGLAGWR). The chain crosses the membrane as a helical span at residues 199–219 (WLFIIDFCITLPIAIYGFIFF). At 220 to 271 (PGLPDQTSAVSKFSMTRYIFNEQELHYARRRLPARDESTRLDWSTIPRVLKR) the chain is on the cytoplasmic side. The chain crosses the membrane as a helical span at residues 272 to 292 (WHWWMFSLVWVLGGENLGFAS). The Extracellular portion of the chain corresponds to 293-312 (NSTFALWLQNQKYTLAQRNN). Residues 313-333 (YPSGIFAVGIVSTLCSAVYMS) form a helical membrane-spanning segment. The Cytoplasmic segment spans residues 334–342 (KIPRARHWH). The chain crosses the membrane as a helical span at residues 343 to 363 (VSVFISLVMVIVAVLIRADPL). At 364-372 (NPKVVFSAQ) the chain is on the extracellular side. Residues 373–393 (YLGGVAYAGQAVFFSWANIIC) form a helical membrane-spanning segment. Topologically, residues 394–401 (HADLQERA) are cytoplasmic. A helical membrane pass occupies residues 402 to 422 (IVLASMNMFSGAVNAWWSILF). The Extracellular portion of the chain corresponds to 423–434 (FASDMVPKFERG). Residues 435-455 (CYALLATAISSGIVSVVIRSL) traverse the membrane as a helical segment. Residues 456 to 512 (QIKENLSKKQVPYIDANDMPGEDDDDDNQDNENDGDDESMEVELHNEEMAEISNPFR) lie on the Cytoplasmic side of the membrane. Residues 468–512 (YIDANDMPGEDDDDDNQDNENDGDDESMEVELHNEEMAEISNPFR) form a disordered region. The span at 475–496 (PGEDDDDDNQDNENDGDDESME) shows a compositional bias: acidic residues.

It belongs to the major facilitator superfamily. Allantoate permease family.

The protein localises to the cell membrane. In terms of biological role, transports pantothenate into the cell. Also involved in the catabolite repression-mediated regulation of ergosterol biosynthesis and in fenpropimorph resistance. This chain is Pantothenate transporter FEN2 (FEN2), found in Saccharomyces cerevisiae (strain ATCC 204508 / S288c) (Baker's yeast).